Here is a 236-residue protein sequence, read N- to C-terminus: 2-C-methyl-D-erythritol 4-phosphate cytidylyltransferase (236 aa).

This sequence belongs to the IspD/TarI cytidylyltransferase family. IspD subfamily. As to quaternary structure, homodimer.

The enzyme catalyses 2-C-methyl-D-erythritol 4-phosphate + CTP + H(+) = 4-CDP-2-C-methyl-D-erythritol + diphosphate. The protein operates within isoprenoid biosynthesis; isopentenyl diphosphate biosynthesis via DXP pathway; isopentenyl diphosphate from 1-deoxy-D-xylulose 5-phosphate: step 2/6. In terms of biological role, catalyzes the formation of 4-diphosphocytidyl-2-C-methyl-D-erythritol from CTP and 2-C-methyl-D-erythritol 4-phosphate (MEP). The protein is 2-C-methyl-D-erythritol 4-phosphate cytidylyltransferase of Salmonella paratyphi B (strain ATCC BAA-1250 / SPB7).